The primary structure comprises 256 residues: Trans-aconitate 2-methyltransferase (256 aa).

Belongs to the methyltransferase superfamily. Tam family.

Its subcellular location is the cytoplasm. The enzyme catalyses trans-aconitate + S-adenosyl-L-methionine = (E)-3-(methoxycarbonyl)pent-2-enedioate + S-adenosyl-L-homocysteine. Its function is as follows. Catalyzes the S-adenosylmethionine monomethyl esterification of trans-aconitate. The polypeptide is Trans-aconitate 2-methyltransferase (Rhodopseudomonas palustris (strain BisB18)).